Reading from the N-terminus, the 161-residue chain is Crossover junction endodeoxyribonuclease RuvC (161 aa).

Residues aspartate 9, glutamate 69, and histidine 144 contribute to the active site. Residues aspartate 9, glutamate 69, and histidine 144 each contribute to the Mg(2+) site.

Belongs to the RuvC family. In terms of assembly, homodimer which binds Holliday junction (HJ) DNA. The HJ becomes 2-fold symmetrical on binding to RuvC with unstacked arms; it has a different conformation from HJ DNA in complex with RuvA. In the full resolvosome a probable DNA-RuvA(4)-RuvB(12)-RuvC(2) complex forms which resolves the HJ. Mg(2+) serves as cofactor.

It localises to the cytoplasm. The catalysed reaction is Endonucleolytic cleavage at a junction such as a reciprocal single-stranded crossover between two homologous DNA duplexes (Holliday junction).. The RuvA-RuvB-RuvC complex processes Holliday junction (HJ) DNA during genetic recombination and DNA repair. Endonuclease that resolves HJ intermediates. Cleaves cruciform DNA by making single-stranded nicks across the HJ at symmetrical positions within the homologous arms, yielding a 5'-phosphate and a 3'-hydroxyl group; requires a central core of homology in the junction. The consensus cleavage sequence is 5'-(A/T)TT(C/G)-3'. Cleavage occurs on the 3'-side of the TT dinucleotide at the point of strand exchange. HJ branch migration catalyzed by RuvA-RuvB allows RuvC to scan DNA until it finds its consensus sequence, where it cleaves and resolves the cruciform DNA. The sequence is that of Crossover junction endodeoxyribonuclease RuvC from Borrelia turicatae (strain 91E135).